We begin with the raw amino-acid sequence, 434 residues long: Tyrosine-protein phosphatase non-receptor type 1 (434 aa).

One can recognise a Tyrosine-protein phosphatase domain in the interval 3–277 (IEKEFHRLDQ…RFSYLAVIEG (275 aa)). Ser-50 is modified (phosphoserine). Substrate contacts are provided by residues Asp-181, 215-221 (CSAGIGR), and Gln-262. The active-site Phosphocysteine intermediate is Cys-215. The interval 291 to 319 (WKELSNEDLDPPPEHTPPPPRPPKRTSEM) is disordered.

The protein belongs to the protein-tyrosine phosphatase family. Non-receptor class 1 subfamily. As to quaternary structure, interacts with EPHA3 (phosphorylated); dephosphorylates EPHA3 and may regulate its trafficking and function. Interacts with MET. Interacts with NCK1. Post-translationally, phosphorylated on serine and threonine residues near the N-terminus by casein kinase II (CK2).

The protein resides in the endoplasmic reticulum membrane. The enzyme catalyses O-phospho-L-tyrosyl-[protein] + H2O = L-tyrosyl-[protein] + phosphate. May play an important role in CKII- and p60c-src-induced signal transduction cascades. May regulate the EFNA5-EPHA3 signaling pathway which modulates cell reorganization and cell-cell repulsion. May also regulate the hepatocyte growth factor receptor signaling pathway through dephosphorylation of MET. In Gallus gallus (Chicken), this protein is Tyrosine-protein phosphatase non-receptor type 1 (PTPN1).